The chain runs to 498 residues: ATP synthase subunit beta, chloroplastic (498 aa).

172 to 179 (GGAGVGKT) provides a ligand contact to ATP.

Belongs to the ATPase alpha/beta chains family. In terms of assembly, F-type ATPases have 2 components, CF(1) - the catalytic core - and CF(0) - the membrane proton channel. CF(1) has five subunits: alpha(3), beta(3), gamma(1), delta(1), epsilon(1). CF(0) has four main subunits: a(1), b(1), b'(1) and c(9-12).

Its subcellular location is the plastid. It is found in the chloroplast thylakoid membrane. It catalyses the reaction ATP + H2O + 4 H(+)(in) = ADP + phosphate + 5 H(+)(out). Its function is as follows. Produces ATP from ADP in the presence of a proton gradient across the membrane. The catalytic sites are hosted primarily by the beta subunits. In Solanum lycopersicum (Tomato), this protein is ATP synthase subunit beta, chloroplastic.